Here is a 141-residue protein sequence, read N- to C-terminus: Hemoglobin subunit alpha-D/D' (141 aa).

The Globin domain occupies 1–141 (MLTADDKKLI…VAAVLAEKYR (141 aa)). The heme b site is built by histidine 58 and histidine 87.

The protein belongs to the globin family. In terms of assembly, heterotetramer of two alpha-D chains and two beta chains. In terms of tissue distribution, red blood cells.

Involved in oxygen transport from the lung to the various peripheral tissues. This Gyps rueppelli (Rueppell's griffon) protein is Hemoglobin subunit alpha-D/D' (HBAD).